We begin with the raw amino-acid sequence, 189 residues long: uncharacterized protein (189 aa).

The HTH tetR-type domain occupies 9-69 (ADTGGRILRA…SMLTSHIADV (61 aa)). A DNA-binding region (H-T-H motif) is located at residues 32–51 (TLAEIARRAGVSRPTVYRRW).

This is an uncharacterized protein from Mycobacterium tuberculosis (strain CDC 1551 / Oshkosh).